Consider the following 226-residue polypeptide: Urease accessory protein UreF (226 aa).

The protein belongs to the UreF family. UreD, UreF and UreG form a complex that acts as a GTP-hydrolysis-dependent molecular chaperone, activating the urease apoprotein by helping to assemble the nickel containing metallocenter of UreC. The UreE protein probably delivers the nickel.

The protein localises to the cytoplasm. Functionally, required for maturation of urease via the functional incorporation of the urease nickel metallocenter. This is Urease accessory protein UreF from Burkholderia cenocepacia (strain HI2424).